Consider the following 144-residue polypeptide: Eukaryotic translation initiation factor 1A (144 aa).

Residues 1-15 (MPKNKGKGGKNRRRG) are compositionally biased toward basic residues. Disordered regions lie at residues 1-26 (MPKNKGKGGKNRRRGKNENESEKREL) and 114-144 (KINETDTFGPGDDDEIQFDDIGDDDEDIDDI). Residues 16-26 (KNENESEKREL) are compositionally biased toward basic and acidic residues. One can recognise an S1-like domain in the interval 22-96 (EKRELVFKED…NKADVILKYN (75 aa)). Residues 124 to 144 (GDDDEIQFDDIGDDDEDIDDI) show a composition bias toward acidic residues.

Belongs to the eIF-1A family. Component of the 43S pre-initiation complex (43S PIC), which is composed of the 40S ribosomal subunit, EIF1, eIF1A (EIF1AX), eIF3 complex, EIF5 and eIF2-GTP-initiator tRNA complex (eIF2 ternary complex). Interacts with EIF5; this interaction contributes to the maintenance of EIF1 within the open 43S PIC. Interacts through its C-terminal domain (CTD) with the CTD of EIF5B; from the location of the start codon by the 43S complex until the formation of the 80S complex.

The protein localises to the cytoplasm. In terms of biological role, component of the 43S pre-initiation complex (43S PIC), which binds to the mRNA cap-proximal region, scans mRNA 5'-untranslated region, and locates the initiation codon. This protein enhances formation of the cap-proximal complex. Together with EIF1, facilitates scanning, start codon recognition, promotion of the assembly of 48S complex at the initiation codon (43S PIC becomes 48S PIC after the start codon is reached), and dissociation of aberrant complexes. After start codon location, together with EIF5B orients the initiator methionine-tRNA in a conformation that allows 60S ribosomal subunit joining to form the 80S initiation complex. Is released after 80S initiation complex formation, just after GTP hydrolysis by EIF5B, and before release of EIF5B. Its globular part is located in the A site of the 40S ribosomal subunit. Its interaction with EIF5 during scanning contribute to the maintenance of EIF1 within the open 43S PIC. In contrast to yeast orthologs, does not bind EIF1. The chain is Eukaryotic translation initiation factor 1A (Eif1a) from Mus musculus (Mouse).